Consider the following 464-residue polypeptide: ATP synthase subunit beta (464 aa).

An ATP-binding site is contributed by G152–T159.

It belongs to the ATPase alpha/beta chains family. F-type ATPases have 2 components, CF(1) - the catalytic core - and CF(0) - the membrane proton channel. CF(1) has five subunits: alpha(3), beta(3), gamma(1), delta(1), epsilon(1). CF(0) has three main subunits: a(1), b(2) and c(9-12). The alpha and beta chains form an alternating ring which encloses part of the gamma chain. CF(1) is attached to CF(0) by a central stalk formed by the gamma and epsilon chains, while a peripheral stalk is formed by the delta and b chains.

Its subcellular location is the cell inner membrane. It catalyses the reaction ATP + H2O + 4 H(+)(in) = ADP + phosphate + 5 H(+)(out). Its function is as follows. Produces ATP from ADP in the presence of a proton gradient across the membrane. The catalytic sites are hosted primarily by the beta subunits. This is ATP synthase subunit beta from Aliarcobacter butzleri (strain RM4018) (Arcobacter butzleri).